The sequence spans 184 residues: Serine recombinase PinE (184 aa).

In terms of domain architecture, Resolvase/invertase-type recombinase catalytic spans 1–134 (MLIGYVRVST…AGLETARAQG (134 aa)). The active-site O-(5'-phospho-DNA)-serine intermediate is Ser9. Positions 161–180 (RQKVAIIYDVGVSTLYKRFP) form a DNA-binding region, H-T-H motif.

The protein belongs to the site-specific recombinase resolvase family.

Its function is as follows. This protein catalyzes the inversion of an 1800-bp E.coli DNA fragment, the P region, which can exist in either orientation. The function of the inversion is not yet clear. This chain is Serine recombinase PinE (pinE), found in Escherichia coli (strain K12).